We begin with the raw amino-acid sequence, 305 residues long: MELIFLGTSAGVPTRSRNVTAILLDLQHPTRAGLWLFDCGEGTQHQLLHTAYHPGKLDKIFITHLHGDHVFGLPGLLCSRSMAGNVNPLTIFGPAGIREFTETALRLSGSWTDYPLEIVEVSEGVVFKDEQYTVTAGALNHPVECYGYRIEEHDKPGALDAAALIADGIKPGPLFQRLKHGDTVTLEDGRIVNGQDYLSAPQPGKKLVIFGDTAPCPAALALARNADVLVHEVTLEAAMEEKANSRGHSSTRQAAQLARDASVGKLLVTHISSRYDAQGCESLLKECRAVFPECELAQDFMQVCV.

Positions 64, 66, 68, 69, 141, 212, and 270 each coordinate Zn(2+). Asp-68 functions as the Proton acceptor in the catalytic mechanism.

The protein belongs to the RNase Z family. RNase BN subfamily. In terms of assembly, homodimer. Zn(2+) is required as a cofactor.

Its function is as follows. Zinc phosphodiesterase, which has both exoribonuclease and endoribonuclease activities. The protein is Ribonuclease BN of Enterobacter sp. (strain 638).